The chain runs to 179 residues: Large ribosomal subunit protein uL6 (179 aa).

A disordered region spans residues 151-179 (RKPEPYKGKGIKYDNEQIRRKAGKSGGKK). The segment covering 152-169 (KPEPYKGKGIKYDNEQIR) has biased composition (basic and acidic residues). Residues 170-179 (RKAGKSGGKK) are compositionally biased toward basic residues.

The protein belongs to the universal ribosomal protein uL6 family. In terms of assembly, part of the 50S ribosomal subunit.

In terms of biological role, this protein binds to the 23S rRNA, and is important in its secondary structure. It is located near the subunit interface in the base of the L7/L12 stalk, and near the tRNA binding site of the peptidyltransferase center. In Nitratidesulfovibrio vulgaris (strain ATCC 29579 / DSM 644 / CCUG 34227 / NCIMB 8303 / VKM B-1760 / Hildenborough) (Desulfovibrio vulgaris), this protein is Large ribosomal subunit protein uL6.